Reading from the N-terminus, the 305-residue chain is Glycine--tRNA ligase alpha subunit (305 aa).

It belongs to the class-II aminoacyl-tRNA synthetase family. In terms of assembly, tetramer of two alpha and two beta subunits.

Its subcellular location is the cytoplasm. The catalysed reaction is tRNA(Gly) + glycine + ATP = glycyl-tRNA(Gly) + AMP + diphosphate. In Heliobacterium modesticaldum (strain ATCC 51547 / Ice1), this protein is Glycine--tRNA ligase alpha subunit.